The sequence spans 318 residues: Methionyl-tRNA formyltransferase (318 aa).

(6S)-5,6,7,8-tetrahydrofolate is bound at residue 112-115; it reads SILP.

It belongs to the Fmt family.

The catalysed reaction is L-methionyl-tRNA(fMet) + (6R)-10-formyltetrahydrofolate = N-formyl-L-methionyl-tRNA(fMet) + (6S)-5,6,7,8-tetrahydrofolate + H(+). Attaches a formyl group to the free amino group of methionyl-tRNA(fMet). The formyl group appears to play a dual role in the initiator identity of N-formylmethionyl-tRNA by promoting its recognition by IF2 and preventing the misappropriation of this tRNA by the elongation apparatus. This chain is Methionyl-tRNA formyltransferase, found in Shewanella frigidimarina (strain NCIMB 400).